Consider the following 434-residue polypeptide: Serine--tRNA ligase (434 aa).

239–241 (TAE) lines the L-serine pocket. Residue 270–272 (RSE) coordinates ATP. Residue E293 participates in L-serine binding. Position 357–360 (357–360 (EISS)) interacts with ATP. S392 serves as a coordination point for L-serine.

It belongs to the class-II aminoacyl-tRNA synthetase family. Type-1 seryl-tRNA synthetase subfamily. Homodimer. The tRNA molecule binds across the dimer.

It localises to the cytoplasm. The catalysed reaction is tRNA(Ser) + L-serine + ATP = L-seryl-tRNA(Ser) + AMP + diphosphate + H(+). It carries out the reaction tRNA(Sec) + L-serine + ATP = L-seryl-tRNA(Sec) + AMP + diphosphate + H(+). It participates in aminoacyl-tRNA biosynthesis; selenocysteinyl-tRNA(Sec) biosynthesis; L-seryl-tRNA(Sec) from L-serine and tRNA(Sec): step 1/1. Its function is as follows. Catalyzes the attachment of serine to tRNA(Ser). Is also able to aminoacylate tRNA(Sec) with serine, to form the misacylated tRNA L-seryl-tRNA(Sec), which will be further converted into selenocysteinyl-tRNA(Sec). The sequence is that of Serine--tRNA ligase from Cupriavidus necator (strain ATCC 17699 / DSM 428 / KCTC 22496 / NCIMB 10442 / H16 / Stanier 337) (Ralstonia eutropha).